Consider the following 101-residue polypeptide: Small ribosomal subunit protein uS14 (101 aa).

The protein belongs to the universal ribosomal protein uS14 family. As to quaternary structure, part of the 30S ribosomal subunit. Contacts proteins S3 and S10.

In terms of biological role, binds 16S rRNA, required for the assembly of 30S particles and may also be responsible for determining the conformation of the 16S rRNA at the A site. The sequence is that of Small ribosomal subunit protein uS14 from Opitutus terrae (strain DSM 11246 / JCM 15787 / PB90-1).